We begin with the raw amino-acid sequence, 441 residues long: Argininosuccinate lyase (441 aa).

The protein belongs to the lyase 1 family. Argininosuccinate lyase subfamily.

The protein resides in the cytoplasm. The enzyme catalyses 2-(N(omega)-L-arginino)succinate = fumarate + L-arginine. The protein operates within amino-acid biosynthesis; L-arginine biosynthesis; L-arginine from L-ornithine and carbamoyl phosphate: step 3/3. The protein is Argininosuccinate lyase of Thermoanaerobacter pseudethanolicus (strain ATCC 33223 / 39E) (Clostridium thermohydrosulfuricum).